A 303-amino-acid chain; its full sequence is Na(+)-translocating NADH-quinone reductase subunit F (303 aa).

Positions 1–45 constitute a 2Fe-2S ferredoxin-type domain; sequence GGSCGQCRVEVHSGGGDILPTEEGHINKREAKSGCRLACQVAVKQ. [2Fe-2S] cluster is bound by residues cysteine 4, cysteine 7, and cysteine 39. Residues 58–198 form the FAD-binding FR-type domain; sequence VQQWECEVIS…SGPFGEFFAK (141 aa). Positions 201-303 are catalytic; that stretch reads DNEMVFIGGG…DHEAPEDCEY (103 aa).

Belongs to the NqrF family. As to quaternary structure, composed of six subunits; NqrA, NqrB, NqrC, NqrD, NqrE and NqrF. Requires [2Fe-2S] cluster as cofactor. The cofactor is FAD.

The protein resides in the cell inner membrane. The catalysed reaction is a ubiquinone + n Na(+)(in) + NADH + H(+) = a ubiquinol + n Na(+)(out) + NAD(+). Functionally, NQR complex catalyzes the reduction of ubiquinone-1 to ubiquinol by two successive reactions, coupled with the transport of Na(+) ions from the cytoplasm to the periplasm. The first step is catalyzed by NqrF, which accepts electrons from NADH and reduces ubiquinone-1 to ubisemiquinone by a one-electron transfer pathway. This chain is Na(+)-translocating NADH-quinone reductase subunit F (nqrF), found in Colwellia maris.